Reading from the N-terminus, the 276-residue chain is 2-dehydro-3-deoxyphosphooctonate aldolase (276 aa).

Belongs to the KdsA family.

The protein resides in the cytoplasm. It carries out the reaction D-arabinose 5-phosphate + phosphoenolpyruvate + H2O = 3-deoxy-alpha-D-manno-2-octulosonate-8-phosphate + phosphate. The protein operates within carbohydrate biosynthesis; 3-deoxy-D-manno-octulosonate biosynthesis; 3-deoxy-D-manno-octulosonate from D-ribulose 5-phosphate: step 2/3. It functions in the pathway bacterial outer membrane biogenesis; lipopolysaccharide biosynthesis. This Xanthomonas oryzae pv. oryzae (strain MAFF 311018) protein is 2-dehydro-3-deoxyphosphooctonate aldolase.